Here is a 347-residue protein sequence, read N- to C-terminus: Involucrin (347 aa).

Disordered regions lie at residues 1-43 (MSQQ…LPAP) and 56-347 (PLED…RRSL). Polar residues predominate over residues 27–36 (ADTQQEQVKQ). 2 stretches are compositionally biased toward low complexity: residues 70-114 (VPEQ…QQES) and 138-161 (DQQQQQESQVQELHVGHHQQQQES). Composition is skewed to basic and acidic residues over residues 164–173 (QELHVDHHQQ) and 212–221 (QELHVDHHQQ). Low complexity-rich tracts occupy residues 222–241 (QQESQVQELHVDHQQQQQES) and 265–285 (DQQQQELQVQEVQQQQQQQQE). Residues 287 to 341 (QEDHQKAEHLEQEEAQREQQLKGQLEQEKKGVYQHLDQELTKRDEHLEKKGEHCW) are compositionally biased toward basic and acidic residues.

The protein belongs to the involucrin family. As to quaternary structure, directly or indirectly cross-linked to cornifelin (CNFN). Post-translationally, substrate of transglutaminase. Specific glutamines or lysines are cross-linked to keratins, desmoplakin and to inter involucrin molecules. In terms of tissue distribution, keratinocytes of epidermis and other stratified squamous epithelia.

It localises to the cytoplasm. Its function is as follows. Part of the insoluble cornified cell envelope (CE) of stratified squamous epithelia. In Sus scrofa (Pig), this protein is Involucrin (IVL).